The primary structure comprises 114 residues: Large ribosomal subunit protein bL20 (114 aa).

This sequence belongs to the bacterial ribosomal protein bL20 family.

Its function is as follows. Binds directly to 23S ribosomal RNA and is necessary for the in vitro assembly process of the 50S ribosomal subunit. It is not involved in the protein synthesizing functions of that subunit. This is Large ribosomal subunit protein bL20 from Flavobacterium johnsoniae (strain ATCC 17061 / DSM 2064 / JCM 8514 / BCRC 14874 / CCUG 350202 / NBRC 14942 / NCIMB 11054 / UW101) (Cytophaga johnsonae).